A 261-amino-acid polypeptide reads, in one-letter code: MRILITNDDGINAPGLEVLEQIALELAGPDGEVWTVAPAFEQSGVSHAISYTHPMMIAKLGPRRYAAEGSPADCVLAALYDVLQGARPDLVLSGVNRGNNSAENVLYSGTVGGALEAALQGLPAIALSQFLGPETEGLADPFECARTHGARIVRLLLERGLWDGEDYRLFYNVNFPPVPAANLRGHRVAAQGFRRDTSFGVEPHMSPSGRRFLWIRGGAQQSPTLPGTDAAVNLEGFVSITPLRADLTAHDRLAELEALIG.

A divalent metal cation contacts are provided by aspartate 8, aspartate 9, serine 43, and asparagine 96.

The protein belongs to the SurE nucleotidase family. Requires a divalent metal cation as cofactor.

The protein resides in the cytoplasm. It catalyses the reaction a ribonucleoside 5'-phosphate + H2O = a ribonucleoside + phosphate. In terms of biological role, nucleotidase that shows phosphatase activity on nucleoside 5'-monophosphates. This is 5'-nucleotidase SurE from Cereibacter sphaeroides (strain KD131 / KCTC 12085) (Rhodobacter sphaeroides).